The chain runs to 206 residues: Imidazole glycerol phosphate synthase subunit HisH (206 aa).

The Glutamine amidotransferase type-1 domain maps to 5-206 (SVVVLDYGSG…AVLRNWIERL (202 aa)). The Nucleophile role is filled by C83. Active-site residues include H187 and E189.

As to quaternary structure, heterodimer of HisH and HisF.

The protein localises to the cytoplasm. It catalyses the reaction 5-[(5-phospho-1-deoxy-D-ribulos-1-ylimino)methylamino]-1-(5-phospho-beta-D-ribosyl)imidazole-4-carboxamide + L-glutamine = D-erythro-1-(imidazol-4-yl)glycerol 3-phosphate + 5-amino-1-(5-phospho-beta-D-ribosyl)imidazole-4-carboxamide + L-glutamate + H(+). It carries out the reaction L-glutamine + H2O = L-glutamate + NH4(+). It functions in the pathway amino-acid biosynthesis; L-histidine biosynthesis; L-histidine from 5-phospho-alpha-D-ribose 1-diphosphate: step 5/9. Its function is as follows. IGPS catalyzes the conversion of PRFAR and glutamine to IGP, AICAR and glutamate. The HisH subunit catalyzes the hydrolysis of glutamine to glutamate and ammonia as part of the synthesis of IGP and AICAR. The resulting ammonia molecule is channeled to the active site of HisF. In Mycolicibacterium paratuberculosis (strain ATCC BAA-968 / K-10) (Mycobacterium paratuberculosis), this protein is Imidazole glycerol phosphate synthase subunit HisH.